Here is a 132-residue protein sequence, read N- to C-terminus: Lectin OAA (132 aa).

2 consecutive repeat copies span residues 1-66 and 67-132. Residues 1–132 form a 2 X approximate tandem repeats region; that stretch reads ALYNVENQWG…GPIGFKGTTL (132 aa).

Monomer.

Functionally, lectin specific for high mannose N-glycans, recognizes the branched moiety of these glycans. Does not recognize other types of N-glycans or monosaccharides. Agglutinates trypsin-treated rabbit erythrocytes. Does not require divalent cations for activity. Inhibits HIV replication in MT4 cells with an EC(50) of 45 nM. Binds to the HIV envelope glycoprotein gp120. This is Lectin OAA from Planktothrix agardhii (Oscillatoria agardhii).